The sequence spans 326 residues: Malate dehydrogenase (326 aa).

An NAD(+)-binding site is contributed by 12-18 (GGTGQIA). Positions 93 and 99 each coordinate substrate. Residues asparagine 106, glutamine 113, and 130–132 (VGN) contribute to the NAD(+) site. Positions 132 and 163 each coordinate substrate. Histidine 188 serves as the catalytic Proton acceptor.

The protein belongs to the LDH/MDH superfamily. MDH type 2 family.

The catalysed reaction is (S)-malate + NAD(+) = oxaloacetate + NADH + H(+). In terms of biological role, catalyzes the reversible oxidation of malate to oxaloacetate. The sequence is that of Malate dehydrogenase from Chlamydia muridarum (strain MoPn / Nigg).